The following is a 749-amino-acid chain: Triacylglycerol lipase 5 (749 aa).

The HXXXXD acyltransferase motif signature appears at 54–59 (HAISYD). In terms of domain architecture, PNPLA spans 183–388 (LVLSGGSTFG…DNDMPISRLS (206 aa)). The GXSXG signature appears at 214 to 218 (GSSAG). Serine 216 serves as the catalytic Nucleophile. N-linked (GlcNAc...) asparagine glycosylation is found at asparagine 270, asparagine 289, asparagine 297, asparagine 304, and asparagine 321. Aspartate 375 (proton acceptor) is an active-site residue. Asparagine 474 and asparagine 589 each carry an N-linked (GlcNAc...) asparagine glycan. The tract at residues 585–643 (IKSPNKTAAPGRFPLQPLPSPSSTFNKRKMDMLSPSPSPSTSPQRSKSSFTQQGTRQKA) is disordered. Positions 623-633 (PSTSPQRSKSS) are enriched in low complexity. The segment covering 634–643 (FTQQGTRQKA) has biased composition (polar residues). Residue serine 645 is modified to Phosphoserine. Asparagine 680, asparagine 714, and asparagine 742 each carry an N-linked (GlcNAc...) asparagine glycan.

The protein localises to the lipid droplet. It catalyses the reaction a triacylglycerol + H2O = a diacylglycerol + a fatty acid + H(+). It carries out the reaction 1-(9Z-octadecenoyl)-sn-glycero-3-phosphate + (9Z)-octadecenoyl-CoA = 1,2-di-(9Z-octadecenoyl)-sn-glycero-3-phosphate + CoA. The enzyme catalyses 1-(9Z-octadecenoyl)-sn-glycero-3-phosphate + hexadecanoyl-CoA = 1-hexadecanoyl-2-(9Z-octadecenoyl)-sn-glycero-3-phosphate + CoA. Loses its lipolytic activity in cells lacking nonpolar lipids, but retains its side activity as lysophospholipid acyltransferase. Functionally, lipid particle-localized triacylglycerol (TAG) lipase. The lipid droplet/particle is a lipid storage compartment which serves as a depot of energy and building blocks for membrane lipid biosynthesis. Involved in the mobilization of the non-polar storage lipids triacylglycerols (TAGs) from lipid particles by hydrolysis of TAGs, releasing and supplying specific fatty acids to the appropriate metabolic pathways. Also catalyzes the acylation of lysophosphatidic acid (LPA). This Saccharomyces cerevisiae (strain ATCC 204508 / S288c) (Baker's yeast) protein is Triacylglycerol lipase 5 (TGL5).